The chain runs to 99 residues: Signal recognition particle 19 kDa protein (99 aa).

It belongs to the SRP19 family. Part of the signal recognition particle protein translocation system, which is composed of SRP and FtsY. Archaeal SRP consists of a 7S RNA molecule of 300 nucleotides and two protein subunits: SRP54 and SRP19.

It is found in the cytoplasm. Involved in targeting and insertion of nascent membrane proteins into the cytoplasmic membrane. Binds directly to 7S RNA and mediates binding of the 54 kDa subunit of the SRP. The polypeptide is Signal recognition particle 19 kDa protein (Pyrococcus horikoshii (strain ATCC 700860 / DSM 12428 / JCM 9974 / NBRC 100139 / OT-3)).